Here is a 177-residue protein sequence, read N- to C-terminus: Dual-action ribosomal maturation protein DarP (177 aa).

Belongs to the DarP family.

Its subcellular location is the cytoplasm. In terms of biological role, member of a network of 50S ribosomal subunit biogenesis factors which assembles along the 30S-50S interface, preventing incorrect 23S rRNA structures from forming. Promotes peptidyl transferase center (PTC) maturation. The polypeptide is Dual-action ribosomal maturation protein DarP (Glaesserella parasuis serovar 5 (strain SH0165) (Haemophilus parasuis)).